We begin with the raw amino-acid sequence, 166 residues long: Large ribosomal subunit protein uL10 (166 aa).

The protein belongs to the universal ribosomal protein uL10 family. Part of the ribosomal stalk of the 50S ribosomal subunit. The N-terminus interacts with L11 and the large rRNA to form the base of the stalk. The C-terminus forms an elongated spine to which L12 dimers bind in a sequential fashion forming a multimeric L10(L12)X complex.

Functionally, forms part of the ribosomal stalk, playing a central role in the interaction of the ribosome with GTP-bound translation factors. The protein is Large ribosomal subunit protein uL10 of Limosilactobacillus reuteri (strain DSM 20016) (Lactobacillus reuteri).